Reading from the N-terminus, the 338-residue chain is tRNA N6-adenosine threonylcarbamoyltransferase (338 aa).

His-111 and His-115 together coordinate Fe cation. Residues 134–138, Asp-167, Gly-180, and Asn-272 contribute to the substrate site; that span reads LVSGG. Asp-300 is a Fe cation binding site.

This sequence belongs to the KAE1 / TsaD family. Fe(2+) is required as a cofactor.

It localises to the cytoplasm. It catalyses the reaction L-threonylcarbamoyladenylate + adenosine(37) in tRNA = N(6)-L-threonylcarbamoyladenosine(37) in tRNA + AMP + H(+). Functionally, required for the formation of a threonylcarbamoyl group on adenosine at position 37 (t(6)A37) in tRNAs that read codons beginning with adenine. Is involved in the transfer of the threonylcarbamoyl moiety of threonylcarbamoyl-AMP (TC-AMP) to the N6 group of A37, together with TsaE and TsaB. TsaD likely plays a direct catalytic role in this reaction. This is tRNA N6-adenosine threonylcarbamoyltransferase from Shewanella denitrificans (strain OS217 / ATCC BAA-1090 / DSM 15013).